The sequence spans 206 residues: ATP-dependent Clp protease proteolytic subunit (206 aa).

The active-site Nucleophile is serine 101. The active site involves histidine 126.

The protein belongs to the peptidase S14 family. Component of the chloroplastic Clp protease core complex.

It is found in the plastid. The protein resides in the chloroplast stroma. It catalyses the reaction Hydrolysis of proteins to small peptides in the presence of ATP and magnesium. alpha-casein is the usual test substrate. In the absence of ATP, only oligopeptides shorter than five residues are hydrolyzed (such as succinyl-Leu-Tyr-|-NHMec, and Leu-Tyr-Leu-|-Tyr-Trp, in which cleavage of the -Tyr-|-Leu- and -Tyr-|-Trp bonds also occurs).. Its function is as follows. Cleaves peptides in various proteins in a process that requires ATP hydrolysis. Has a chymotrypsin-like activity. Plays a major role in the degradation of misfolded proteins. The sequence is that of ATP-dependent Clp protease proteolytic subunit from Solanum lycopersicum (Tomato).